Consider the following 199-residue polypeptide: Golgi to ER traffic protein 1 (199 aa).

Over 1 to 11 the chain is Lumenal; sequence MLLPDLHPYTI. The helical transmembrane segment at 12 to 31 threads the bilayer; sequence LLSIFLVLVAKQLVATIGKS. Over 32–115 the chain is Cytoplasmic; the sequence is TIQEFVWLVY…SIDKASNALI (84 aa). Residues 76–116 are a coiled coil; it reads YAKWTKLNRQADKLSAELQKLNQEIQQQKSSIDKASNALIL. A helical membrane pass occupies residues 116–136; sequence LVLTTLPIWIARVFYRKTHLF. Over 137-160 the chain is Lumenal; it reads YIRQGIFPKYVEWVLALPFLPNGA. The helical transmembrane segment at 161 to 177 threads the bilayer; it reads VGLTIWMFAVNSVVSNF. Residues 178–199 are Cytoplasmic-facing; it reads SFLVSFPFAKRVSKPVRDTKVE.

Belongs to the WRB/GET1 family. Component of the Golgi to ER traffic (GET) complex, which is composed of GET1, GET2 and GET3. Within the complex, GET1 and GET2 form a heterotetramer which is stabilized by phosphatidylinositol binding and which binds to the GET3 homodimer.

It localises to the endoplasmic reticulum membrane. It is found in the golgi apparatus membrane. Required for the post-translational delivery of tail-anchored (TA) proteins to the endoplasmic reticulum. Together with GET2, acts as a membrane receptor for soluble GET3, which recognizes and selectively binds the transmembrane domain of TA proteins in the cytosol. The GET complex cooperates with the HDEL receptor ERD2 to mediate the ATP-dependent retrieval of resident ER proteins that contain a C-terminal H-D-E-L retention signal from the Golgi to the ER. This is Golgi to ER traffic protein 1 from Candida albicans (strain SC5314 / ATCC MYA-2876) (Yeast).